We begin with the raw amino-acid sequence, 237 residues long: ATP synthase subunit a (237 aa).

4 consecutive transmembrane segments (helical) span residues 17 to 37 (LSDM…AVAA), 78 to 98 (LGVT…PFWL), 178 to 198 (ILLG…CGSI), and 201 to 221 (MVIM…AFIF).

The protein belongs to the ATPase A chain family. F-type ATPases have 2 components, CF(1) - the catalytic core - and CF(0) - the membrane proton channel. CF(1) has five subunits: alpha(3), beta(3), gamma(1), delta(1), epsilon(1). CF(0) has three main subunits: a(1), b(2) and c(9-12). The alpha and beta chains form an alternating ring which encloses part of the gamma chain. CF(1) is attached to CF(0) by a central stalk formed by the gamma and epsilon chains, while a peripheral stalk is formed by the delta and b chains.

The protein resides in the cell membrane. Functionally, key component of the proton channel; it plays a direct role in the translocation of protons across the membrane. In Bacillus caldotenax, this protein is ATP synthase subunit a.